Here is a 122-residue protein sequence, read N- to C-terminus: Large ribosomal subunit protein bL12 (122 aa).

The protein belongs to the bacterial ribosomal protein bL12 family. In terms of assembly, homodimer. Part of the ribosomal stalk of the 50S ribosomal subunit. Forms a multimeric L10(L12)X complex, where L10 forms an elongated spine to which 2 to 4 L12 dimers bind in a sequential fashion. Binds GTP-bound translation factors.

In terms of biological role, forms part of the ribosomal stalk which helps the ribosome interact with GTP-bound translation factors. Is thus essential for accurate translation. This is Large ribosomal subunit protein bL12 from Streptococcus pneumoniae serotype 19F (strain G54).